The sequence spans 98 residues: NADH-ubiquinone oxidoreductase chain 4L (98 aa).

3 consecutive transmembrane segments (helical) span residues Met1–Ile21, Ser28–Ile48, and Ala59–Val79.

The protein belongs to the complex I subunit 4L family. As to quaternary structure, core subunit of respiratory chain NADH dehydrogenase (Complex I) which is composed of 45 different subunits.

The protein localises to the mitochondrion inner membrane. It catalyses the reaction a ubiquinone + NADH + 5 H(+)(in) = a ubiquinol + NAD(+) + 4 H(+)(out). In terms of biological role, core subunit of the mitochondrial membrane respiratory chain NADH dehydrogenase (Complex I) which catalyzes electron transfer from NADH through the respiratory chain, using ubiquinone as an electron acceptor. Part of the enzyme membrane arm which is embedded in the lipid bilayer and involved in proton translocation. This chain is NADH-ubiquinone oxidoreductase chain 4L (MT-ND4L), found in Trichosurus vulpecula (Brush-tailed possum).